Here is a 279-residue protein sequence, read N- to C-terminus: Putative pyruvate, phosphate dikinase regulatory protein (279 aa).

152–159 contributes to the ADP binding site; the sequence is GVSRTSKS.

This sequence belongs to the pyruvate, phosphate/water dikinase regulatory protein family. PDRP subfamily.

The enzyme catalyses N(tele)-phospho-L-histidyl/L-threonyl-[pyruvate, phosphate dikinase] + ADP = N(tele)-phospho-L-histidyl/O-phospho-L-threonyl-[pyruvate, phosphate dikinase] + AMP + H(+). The catalysed reaction is N(tele)-phospho-L-histidyl/O-phospho-L-threonyl-[pyruvate, phosphate dikinase] + phosphate + H(+) = N(tele)-phospho-L-histidyl/L-threonyl-[pyruvate, phosphate dikinase] + diphosphate. Bifunctional serine/threonine kinase and phosphorylase involved in the regulation of the pyruvate, phosphate dikinase (PPDK) by catalyzing its phosphorylation/dephosphorylation. This chain is Putative pyruvate, phosphate dikinase regulatory protein, found in Anaplasma marginale (strain St. Maries).